A 185-amino-acid chain; its full sequence is Ribosome-recycling factor (185 aa).

This sequence belongs to the RRF family.

It localises to the cytoplasm. Functionally, responsible for the release of ribosomes from messenger RNA at the termination of protein biosynthesis. May increase the efficiency of translation by recycling ribosomes from one round of translation to another. The protein is Ribosome-recycling factor of Streptococcus pyogenes serotype M28 (strain MGAS6180).